The following is a 348-amino-acid chain: Type IV methyl-directed restriction enzyme EcoKMcrBC (348 aa).

In terms of biological role, modifies the specificity of McrB restriction by expanding the range of modified sequences restricted. Does not bind to DNA. The chain is Type IV methyl-directed restriction enzyme EcoKMcrBC (mcrC) from Escherichia coli (strain K12).